The chain runs to 1019 residues: Phosphatidylinositol 3,4,5-trisphosphate 5-phosphatase 1 (1019 aa).

The region spanning 5–101 (WYHGNITRSK…GLVTHLQYPI (97 aa)) is the SH2 domain. Residues 103–116 (KEEEGPEEPDEEQE) are compositionally biased toward acidic residues. Disordered regions lie at residues 103–133 (KEEE…TPPS) and 909–1019 (ETQN…PPTA). Positions 120–125 (PNVPPR) match the SH3-binding 1 motif. Composition is skewed to polar residues over residues 909 to 931 (ETQN…KQSP) and 958 to 980 (PITS…TNRT). The short motif at 966–971 (TLSTQK) is the SH3-binding 2 element. Positions 1004 to 1007 (NPLY) match the NPXY motif motif. Tyr1007 is modified (phosphotyrosine). Over residues 1010 to 1019 (VNNTLYPPTA) the composition is skewed to polar residues.

This sequence belongs to the inositol 1,4,5-trisphosphate 5-phosphatase family. Post-translationally, tyrosine phosphorylated by the members of the SRC family after exposure to a diverse array of extracellular stimuli.

The protein resides in the cytoplasm. Its subcellular location is the cell membrane. The protein localises to the membrane raft. It is found in the cytoskeleton. The catalysed reaction is a 1,2-diacyl-sn-glycero-3-phospho-(1D-myo-inositol-3,4,5-trisphosphate) + H2O = a 1,2-diacyl-sn-glycero-3-phospho-(1D-myo-inositol-3,4-bisphosphate) + phosphate. It catalyses the reaction 1D-myo-inositol 1,3,4,5-tetrakisphosphate + H2O = 1D-myo-inositol 1,3,4-trisphosphate + phosphate. It carries out the reaction a 1,2-diacyl-sn-glycero-3-phospho-(1D-myo-inositol-4,5-bisphosphate) + H2O = a 1,2-diacyl-sn-glycero-3-phospho-(1D-myo-inositol 4-phosphate) + phosphate. Phosphatidylinositol (PtdIns) phosphatase that specifically hydrolyzes the 5-phosphate of phosphatidylinositol-3,4,5-trisphosphate (PtdIns(3,4,5)P3) to produce PtdIns(3,4)P2, thereby negatively regulating the PI3K (phosphoinositide 3-kinase) pathways. Able also to hydrolyzes the 5-phosphate of phosphatidylinositol-4,5-bisphosphate (PtdIns(4,5)P3) and inositol 1,3,4,5-tetrakisphosphate. Acts as a negative regulator of B-cell antigen receptor signaling. Mediates signaling from the FC-gamma-RIIB receptor (FCGR2B), playing a central role in terminating signal transduction from activating immune/hematopoietic cell receptor systems. Acts as a negative regulator of myeloid cell proliferation/survival and chemotaxis, mast cell degranulation, immune cells homeostasis, integrin alpha-IIb/beta-3 signaling in platelets and JNK signaling in B-cells. This Xenopus laevis (African clawed frog) protein is Phosphatidylinositol 3,4,5-trisphosphate 5-phosphatase 1 (inpp5d).